A 3291-amino-acid chain; its full sequence is Protocadherin-16 (3291 aa).

The first 35 residues, 1 to 35, serve as a signal peptide directing secretion; sequence MQEELSVALSCPGMKSLGTLLPLLVLLGTTVPGIR. The Extracellular segment spans residues 36-2933; it reads GQAGSLDLQI…PDLNLLLVGA (2898 aa). Cadherin domains are found at residues 37–137, 138–249, 250–356, 369–466, 476–572, 573–679, 680–784, 785–888, 889–994, 995–1105, 1100–1205, 1218–1317, 1326–1429, 1430–1539, 1539–1642, 1643–1744, 1745–1848, 1849–1953, 1976–2061, 2062–2164, 2165–2270, 2270–2369, 2370–2475, 2476–2595, 2596–2699, 2700–2806, and 2807–2926; these read QAGS…APAF, PQAR…APAF, NQSR…QPSM, VSEA…APAF, LPEV…EPQF, QRTF…PPQF, YPRE…PPIF, EQLQ…SPAF, PAPE…APRF, DSPT…EPTF, SEEP…SPTF, IQVP…SPDL, VPVV…APAF, ARDP…APVF, FASP…APAF, PQQE…SPTF, GNTH…APAF, PVPS…APAF, LATL…GPRF, PRAN…APRF, LQPH…RPTI, IPQP…VPIF, SQSL…APSF, TLPH…PPVF, TRAS…GPAF, PLSL…DPVF, and LAPS…APDL. The N-linked (GlcNAc...) asparagine glycan is linked to Asn396. A disordered region spans residues 951–971; sequence GPPGGPPHELEVEAQDGGSPP. Asn1711 carries an N-linked (GlcNAc...) asparagine glycan. Asn2354 carries an N-linked (GlcNAc...) asparagine glycan. N-linked (GlcNAc...) asparagine glycosylation occurs at Asn2562. A helical transmembrane segment spans residues 2934–2954; sequence VAASLGVVVVLALAALVLGLV. The Cytoplasmic segment spans residues 2955–3291; the sequence is RARSRKAEAA…EPPDDTELRI (337 aa). Residues 2978-3033 form a disordered region; it reads SLQKLGREPPSPPPSEHLYHQTLPSYGGPGAGGPYPRGGSLDPSHSSGRGSAEAAE. A compositionally biased stretch (gly residues) spans 3004–3013; that stretch reads GGPGAGGPYP. A Phosphoserine modification is found at Ser3048. Disordered stretches follow at residues 3051-3080 and 3226-3291; these read SSLAARGPDSGIQQDADGLSDTSCEPPAPD and ASHR…ELRI. A compositionally biased stretch (low complexity) spans 3237 to 3259; the sequence is SLSSAAMSPSFSPSLSPLAARSP. The segment covering 3270-3279 has biased composition (polar residues); that stretch reads PSASALSTES.

In terms of assembly, heterophilic interaction with FAT4; this interaction affects their respective protein levels.

It localises to the cell membrane. In terms of biological role, calcium-dependent cell-adhesion protein. Mediates functions in neuroprogenitor cell proliferation and differentiation. This is Protocadherin-16 (Dchs1) from Rattus norvegicus (Rat).